The chain runs to 381 residues: Succinyl-diaminopimelate desuccinylase (381 aa).

Residue histidine 68 participates in Zn(2+) binding. Aspartate 70 is an active-site residue. Aspartate 101 is a Zn(2+) binding site. Residue glutamate 135 is the Proton acceptor of the active site. Zn(2+) contacts are provided by glutamate 136, glutamate 164, and histidine 350.

It belongs to the peptidase M20A family. DapE subfamily. As to quaternary structure, homodimer. Zn(2+) serves as cofactor. It depends on Co(2+) as a cofactor.

The catalysed reaction is N-succinyl-(2S,6S)-2,6-diaminopimelate + H2O = (2S,6S)-2,6-diaminopimelate + succinate. It functions in the pathway amino-acid biosynthesis; L-lysine biosynthesis via DAP pathway; LL-2,6-diaminopimelate from (S)-tetrahydrodipicolinate (succinylase route): step 3/3. In terms of biological role, catalyzes the hydrolysis of N-succinyl-L,L-diaminopimelic acid (SDAP), forming succinate and LL-2,6-diaminopimelate (DAP), an intermediate involved in the bacterial biosynthesis of lysine and meso-diaminopimelic acid, an essential component of bacterial cell walls. In Neisseria gonorrhoeae (strain NCCP11945), this protein is Succinyl-diaminopimelate desuccinylase.